Reading from the N-terminus, the 421-residue chain is Ankyrin repeat domain-containing protein 61 (421 aa).

8 ANK repeats span residues 27–57, 74–103, 107–146, 166–195, 199–228, 233–272, 276–305, and 309–342; these read TLHS…NQPL, QPIF…DPEV, QGFT…NAVL, NKHS…QVNA, SSMT…NVNC, TGNT…QVNA, EGQT…NVNI, and NGES…PLRL.

The chain is Ankyrin repeat domain-containing protein 61 (Ankrd61) from Mus musculus (Mouse).